A 113-amino-acid polypeptide reads, in one-letter code: Con-Ins G3b (113 aa).

The first 21 residues, 1-21, serve as a signal peptide directing secretion; sequence MTTSFYFLLVALGLLLYVCQS. A propeptide spanning residues 22-29 is cleaved from the precursor; that stretch reads SFGNQHTR. 4-hydroxyproline; partial is present on proline 34. 3 disulfides stabilise this stretch: cysteine 38-cysteine 99, cysteine 50-cysteine 112, and cysteine 98-cysteine 103. At glutamate 41 the chain carries 4-carboxyglutamate. The residue at position 51 (histidine 51) is a Histidine amide. Residues 52 to 92 constitute a propeptide, c peptide; the sequence is GKRNDAGKKRGRASPLWQRQGFLSMLKAKRNEAFFLQRDGR. A 4-carboxyglutamate modification is found at glutamate 96. Residue proline 102 is modified to 4-hydroxyproline; partial.

Belongs to the insulin family. In terms of assembly, heterodimer of A and B chains; disulfide-linked. It is noteworthy that in this dimer, in contrast to Con-Ins G1, the chain B is amidated and not the chain A. In terms of tissue distribution, expressed by the venom gland.

Its subcellular location is the secreted. This venom insulin, from a fish-hunting cone snail, facilitates prey capture by rapidly inducing hypoglycemic shock. It is one of the smallest known insulin found in nature and lacks the C-terminal segment of the B chain that, in human insulin, mediates engagement of the insulin receptor (INSR) and assembly of the hormone's hexameric storage form. Despite lacking this segment, it both binds and activates human insulin receptor (long isoform (HIR-B)) with only a 10-fold lower potency. In vivo, intraperitoneal injection of this peptide into zebrafish lowers blood glucose with the same potency than human insulin. In addition, when applied to water, this peptide reduces overall locomotor activity of zebrafish larvae, observed as a significant decrease in the percentage of time spent swimming and movement frequency. In Conus geographus (Geography cone), this protein is Con-Ins G3b.